Here is a 439-residue protein sequence, read N- to C-terminus: UDP-N-acetylmuramate--L-alanine ligase (439 aa).

113–119 serves as a coordination point for ATP; sequence GSHGKTS.

This sequence belongs to the MurCDEF family.

It localises to the cytoplasm. The catalysed reaction is UDP-N-acetyl-alpha-D-muramate + L-alanine + ATP = UDP-N-acetyl-alpha-D-muramoyl-L-alanine + ADP + phosphate + H(+). Its pathway is cell wall biogenesis; peptidoglycan biosynthesis. Functionally, cell wall formation. The chain is UDP-N-acetylmuramate--L-alanine ligase from Lactobacillus delbrueckii subsp. bulgaricus (strain ATCC 11842 / DSM 20081 / BCRC 10696 / JCM 1002 / NBRC 13953 / NCIMB 11778 / NCTC 12712 / WDCM 00102 / Lb 14).